The primary structure comprises 495 residues: MVSEITHQSYPLHFVLFPYMAQGHMIPMVDIARLLAQRGVKITIVTTPQNAARFENVLSRAIESGLPISIVQVKLPSQEAGLPEGIETFESLVSMELLVPFFKAVNMLEEPVQKLFEEMSPQPSCIISDFCLHYTSKIAKKFNIPKILFHGMCCFCLLCMHVLRKNCEILENLKSDKEHFVVPYFPDRVEFTRPQVPMATYAPGDWQEIREDIVEADKTSYGVIVNTYQELEPAYANDYKEARSGKAWTIGPVSLCNKVGADKAERGNKADIDQDECLKWLDSKEEGSVLYVCLGSNCSVPLSQLKELGLGLEESQRPFIWVVRGWEKNKELLEWFSESGFEERVKDRGLLIKGWSPQMLILAHHSVGGFLTHCGWNSTLEGITSGIPLLTWPLIVDQFCNQKLVVQVLKVGVSAGVEEVTNWGEEEKIGVLVDKEGVKKAVEELMGESDDAKERRKRVKALGQLAHKAVEEGGSSHSNITSLLEDIMQLAQSNN.

UDP-alpha-D-glucose is bound at residue 23-26; that stretch reads GHMI. The active-site Proton acceptor is the His24. The Charge relay role is filled by Asp129. UDP-alpha-D-glucose-binding positions include 355–358, 373–381, and 397–398; these read WSPQ, HCGWNSTLE, and DQ.

This sequence belongs to the UDP-glycosyltransferase family.

Possesses very weak glucosyltransferase activity toward 2,4,5-trichlorophenol (TCP), when assayed with high concentrations of TCP. The sequence is that of UDP-glycosyltransferase 73C9 from Barbarea vulgaris (Yellow rocket).